The chain runs to 1349 residues: Serine/threonine-protein kinase GIN4 (1349 aa).

The segment covering 1–20 has biased composition (low complexity); that stretch reads MPHSRQPSISSSIMSQSNHN. The tract at residues 1–30 is disordered; it reads MPHSRQPSISSSIMSQSNHNHPQKIGPWKL. Ser10, Ser11, Ser12, and Ser15 each carry phosphoserine. Residues 28-288 enclose the Protein kinase domain; sequence WKLGKTLGRG…TEKILRHPLL (261 aa). ATP contacts are provided by residues 34–42 and Lys57; that span reads LGRGATGRV. Thr69 bears the Phosphothreonine mark. Catalysis depends on Asp158, which acts as the Proton acceptor. Thr191 carries the phosphothreonine modification. Residues Ser294, Ser300, and Ser303 each carry the phosphoserine modification. Disordered regions lie at residues 366 to 498 and 510 to 532; these read QEDN…KAKP and SNFS…YMID. Positions 369 to 384 are enriched in low complexity; the sequence is NTNNNSPKKSTSFNNK. Phosphoserine occurs at positions 388, 390, and 393. At Thr397 the chain carries Phosphothreonine. Composition is skewed to polar residues over residues 406-418 and 426-442; these read ISVS…QYKS and ANRN…SANN. Residues Ser407 and Ser409 each carry the phosphoserine modification. The residue at position 412 (Thr412) is a Phosphothreonine. Ser413 carries the post-translational modification Phosphoserine. Residues 443–470 show a composition bias toward low complexity; that stretch reads SPRKSPYKSPYRSPYRSPYKSPSKRYSY. 5 positions are modified to phosphoserine: Ser455, Ser469, Ser473, Ser477, and Ser485. A compositionally biased stretch (polar residues) spans 471-488; it reads NQSPTKSPYGRRSNSQRQ. Ser556 carries the phosphoserine modification. Residues 570 to 585 are compositionally biased toward low complexity; sequence RNSIIGKNNNNSNSNK. Residues 570-593 form a disordered region; sequence RNSIIGKNNNNSNSNKRMSKRKSI. Ser634 carries the phosphoserine modification. Residues 661–701 are a coiled coil; sequence EEKEAKEYERLMELERKKHEAELKARRELEKKKRRQKRRSI. The interval 712–737 is disordered; it reads KNDADPNNSEQELVDEGIKQPKRQSK. Residues Ser720 and Ser746 each carry the phosphoserine modification. The disordered stretch occupies residues 756-798; that stretch reads TLEDVENLKRRSASQPVPKRRQTPVLTRRPVSRLDPLWQAHEN. Phosphothreonine is present on residues Thr778, Thr869, and Thr876. Position 891 is a phosphoserine (Ser891). Position 941 is a phosphothreonine (Thr941). Phosphoserine is present on Ser973. 2 positions are modified to phosphothreonine: Thr990 and Thr992. Residue Ser999 is modified to Phosphoserine. The disordered stretch occupies residues 1011–1229; that stretch reads RTSYYDGSGK…AESKEEKPKS (219 aa). A compositionally biased stretch (polar residues) spans 1024–1040; it reads RASTTKRYNVHSSSGQR. The segment covering 1044–1053 has biased composition (basic and acidic residues); that stretch reads KVPDLPKNDY. Thr1056 is modified (phosphothreonine). Phosphoserine occurs at positions 1059, 1074, 1077, 1078, 1080, and 1094. Over residues 1083-1094 the composition is skewed to basic and acidic residues; sequence VFDKIKLPDGKS. Thr1095 carries the phosphothreonine modification. A phosphoserine mark is found at Ser1097 and Ser1098. A Phosphothreonine modification is found at Thr1106. Polar residues predominate over residues 1134 to 1149; sequence IESSQPMSKVRGNNSS. Ser1154 is modified (phosphoserine). The span at 1202-1215 shows a compositional bias: low complexity; it reads NNTNAATNTTTQQQ. Phosphoserine is present on Ser1218.

It belongs to the protein kinase superfamily. CAMK Ser/Thr protein kinase family. NIM1 subfamily. Associates with the septin complex which consists of CDC3, CDC10, CDC11, CDC12, and SEP7. Post-translationally, hyperphosphorylated during mitosis at dozens of sites. Among these, 7 have perfect or minimal CDK consensus sites and are CDC28 targets.

It localises to the cytoplasm. The protein resides in the bud neck. It catalyses the reaction L-seryl-[protein] + ATP = O-phospho-L-seryl-[protein] + ADP + H(+). The enzyme catalyses L-threonyl-[protein] + ATP = O-phospho-L-threonyl-[protein] + ADP + H(+). Its function is as follows. Serine/threonine-protein kinase which regulates the localization and the function of the septins during mitosis. Involved in the formation of the septin ring but not the basal septin band. Phosphorylates septins CDC11 and SEP7. Required for the transition from pseudohyphae to hyphae. Acts upstream of IRS4 and INP51 in regulating cell wall integrity responses. Involved in propolis-induced cell death. This is Serine/threonine-protein kinase GIN4 (GIN4) from Candida albicans (strain SC5314 / ATCC MYA-2876) (Yeast).